Here is a 247-residue protein sequence, read N- to C-terminus: tRNA (guanine-N(1)-)-methyltransferase (247 aa).

S-adenosyl-L-methionine contacts are provided by residues glycine 115 and isoleucine 135 to leucine 140.

The protein belongs to the RNA methyltransferase TrmD family. Homodimer.

Its subcellular location is the cytoplasm. The catalysed reaction is guanosine(37) in tRNA + S-adenosyl-L-methionine = N(1)-methylguanosine(37) in tRNA + S-adenosyl-L-homocysteine + H(+). In terms of biological role, specifically methylates guanosine-37 in various tRNAs. This chain is tRNA (guanine-N(1)-)-methyltransferase, found in Alkaliphilus metalliredigens (strain QYMF).